A 345-amino-acid polypeptide reads, in one-letter code: MNASLYQQYVQAKAEHPGKYARDLATLMGISEAELTHSRVGHDAKRLQSDARALLAALESVGEVKAITRNTYAVHEQVGRYENQHLNGHAGLILNPRALDLRLFLNQWASAFTLTEETRHGVRHSIQFFDHQGDALHKVYVTEQTDMSAWEALLAQFIIPENPALQLEPLSTPEAVEPTADDATVDSEWRAMTDVHQFFQLLKRNNLTRQQAFRAVGDDLAYQVDNNSLTQLLHIAQQDQNEIMIFVGNRGCVQIFTGLIEKVTPHNEWINVFNQRFTLHLIETAIAESWITRKPTKDGFVTSLELFAADGTQLAQLYGQRTEGQPEQNQWREQIARLINKDIAA.

To Y.enterocolitica HemS.

Functionally, part of the binding-protein-dependent transport system for hemin. The sequence is that of Hemin transport protein HmuS (hmuS) from Yersinia pestis.